Consider the following 397-residue polypeptide: Staphylopine export protein (397 aa).

Transmembrane regions (helical) follow at residues 12-32, 38-58, 77-97, 102-122, 134-154, 158-178, 217-237, 239-259, 285-305, 309-329, 337-357, and 363-383; these read LYIL…FIPL, GATN…AMVF, IILI…LEGY, VMQG…IIDA, LYSL…VGIW, NISL…FFGY, GIIM…VPLY, VSLG…AVVA, LLVI…IIFY, ILIG…LSFV, MLLG…GALM, and LVGF…IMIM.

It belongs to the major facilitator superfamily.

It localises to the cell membrane. In terms of biological role, involved in the export of the metallophore staphylopine. This chain is Staphylopine export protein, found in Staphylococcus aureus (strain Mu50 / ATCC 700699).